A 268-amino-acid chain; its full sequence is MEMO1 family protein Ta0237 (268 aa).

It belongs to the MEMO1 family.

In Thermoplasma acidophilum (strain ATCC 25905 / DSM 1728 / JCM 9062 / NBRC 15155 / AMRC-C165), this protein is MEMO1 family protein Ta0237.